A 226-amino-acid polypeptide reads, in one-letter code: Transmembrane protein 98 (226 aa).

Residues 1 to 3 (MET) are Cytoplasmic-facing. Residues 1–88 (METVVIVAIG…ENEDWIEDAS (88 aa)) are required for interaction with MYRF. A helical transmembrane segment spans residues 4-24 (VVIVAIGVLATIFLASFAALV). Residues 25 to 226 (VVCRQRYCRP…EGFLQEQSAI (202 aa)) are Extracellular-facing. The disordered stretch occupies residues 207 to 226 (SEPDKSLPNPEGFLQEQSAI).

It belongs to the TMEM98 family. In terms of assembly, interacts (via N-terminal region) with MYRF; the interaction inhibits MYRF self-cleavage. In terms of tissue distribution, expressed in differentiated oligodendrocytes in early postanatal central nervous system tissues. Expressed by CD4(+) T cells, the expression increases upon activation (at protein level).

The protein localises to the endoplasmic reticulum membrane. The protein resides in the cell membrane. It is found in the secreted. Its subcellular location is the extracellular exosome. In terms of biological role, functions as a negative regulator of MYRF in oligodendrocyte differentiation and myelination. Interacts with the C-terminal of MYRF inhibiting MYRF self-cleavage and N-fragment nuclear translocation. The secreted form promotes differentiation of T helper 1 cells (Th1). The chain is Transmembrane protein 98 (Tmem98) from Mus musculus (Mouse).